The following is a 556-amino-acid chain: Adenine deaminase (556 aa).

Belongs to the metallo-dependent hydrolases superfamily. Adenine deaminase family. Mn(2+) serves as cofactor.

The catalysed reaction is adenine + H2O + H(+) = hypoxanthine + NH4(+). The protein is Adenine deaminase of Methanocaldococcus jannaschii (strain ATCC 43067 / DSM 2661 / JAL-1 / JCM 10045 / NBRC 100440) (Methanococcus jannaschii).